The following is a 460-amino-acid chain: Heme sensor protein HssS (460 aa).

2 consecutive transmembrane segments (helical) span residues isoleucine 11–isoleucine 31 and isoleucine 164–serine 184. Positions tyrosine 186–aspartate 238 constitute an HAMP domain. The region spanning asparagine 246–proline 456 is the Histidine kinase domain. Histidine 249 bears the Phosphohistidine; by autocatalysis mark.

In terms of processing, autophosphorylated.

Its subcellular location is the cell membrane. The catalysed reaction is ATP + protein L-histidine = ADP + protein N-phospho-L-histidine.. Functionally, member of the two-component regulatory system HssS/HssR involved in intracellular heme homeostasis and tempering of staphylococcal virulence. HssS functions as a heme sensor histidine kinase which is autophosphorylated at a histidine residue and transfers its phosphate group to an aspartate residue of HssR. HssR/HssS activates the expression of hrtAB, an efflux pump, in response to extracellular heme, hemin, hemoglobin or blood. The polypeptide is Heme sensor protein HssS (hssS) (Staphylococcus saprophyticus subsp. saprophyticus (strain ATCC 15305 / DSM 20229 / NCIMB 8711 / NCTC 7292 / S-41)).